The chain runs to 307 residues: Transcription factor bHLH127 (307 aa).

Disordered regions lie at residues 41–68 (SDPLPILRGSGSGGREENTPLPPPLPHQ) and 101–155 (PHPQ…AEMH). Residues 110–119 (APPPPKPPSS) show a composition bias toward pro residues. In terms of domain architecture, bHLH spans 150–199 (RAAEMHNLAERRRREKINERMKTLQQLIPRCNKSTKVSMLEDVIEYVKSL).

It belongs to the bHLH protein family. As to quaternary structure, homodimer.

Its subcellular location is the nucleus. The polypeptide is Transcription factor bHLH127 (BHLH127) (Arabidopsis thaliana (Mouse-ear cress)).